A 134-amino-acid polypeptide reads, in one-letter code: T-cell receptor alpha chain V region RL-5 (134 aa).

Residues 1 to 20 (MFSASCSVTVVVLLITVRRT) form the signal peptide. The v segment stretch occupies residues 21–114 (NGASVTQTEG…DSAVYYCALR (94 aa)). The interval 115–134 (RGASNKLTLGTGTLLKVELN) is j segment. N-linked (GlcNAc...) asparagine glycosylation occurs at Asn134.

Post-translationally, rearrangement with the C region would elongate the sequence with Ile-Thr-; which creates a potential N-glycosylation site at Asn-134.

This is T-cell receptor alpha chain V region RL-5 from Oryctolagus cuniculus (Rabbit).